Consider the following 35-residue polypeptide: Tau/kappa-theraphotoxin-Pc1a (35 aa).

Intrachain disulfides connect Cys-3–Cys-17, Cys-10–Cys-22, and Cys-16–Cys-29. Phe-35 is modified (phenylalanine amide).

The protein belongs to the neurotoxin 10 (Hwtx-1) family. 62 (Vatx) subfamily. In terms of tissue distribution, expressed by the venom gland.

The protein localises to the secreted. Functionally, selectively activates mammalian TRPV1, the capsaicin receptor, a non-selective cation channel expressed by sensory neurons of the pain pathway. Is less potent than VaTx2 and VaTx3. Interacts with distinct regions of the channel than capsaicin, since it only acts on the extracellular face of the channel, and capsaicin binds to the cytosolic side. Also activates avian TRPV1, which is insensitive to capsaicin. Significantly inhibits potassium channels Kv2.1/KCNB1. In Psalmopoeus cambridgei (Trinidad chevron tarantula), this protein is Tau/kappa-theraphotoxin-Pc1a.